Consider the following 235-residue polypeptide: REF/SRPP-like protein At2g47780 (235 aa).

Positions 1 to 12 (MAEDEIVVEEEQ) are enriched in acidic residues. The segment at 1-32 (MAEDEIVVEEEQSQPQEITPVPPSSSSSPSLV) is disordered.

It belongs to the REF/SRPP family.

In Arabidopsis thaliana (Mouse-ear cress), this protein is REF/SRPP-like protein At2g47780.